The chain runs to 151 residues: Ribosome maturation factor RimP (151 aa).

It belongs to the RimP family.

The protein localises to the cytoplasm. Required for maturation of 30S ribosomal subunits. The protein is Ribosome maturation factor RimP of Shewanella amazonensis (strain ATCC BAA-1098 / SB2B).